We begin with the raw amino-acid sequence, 123 residues long: Thioredoxin H-type 1 (123 aa).

Position 2 is an N-acetylalanine (Ala-2). Residues 2–119 form the Thioredoxin domain; that stretch reads AATAEVIPAG…IEAKLLKHSQ (118 aa). Cys-45 and Cys-48 form a disulfide bridge.

This sequence belongs to the thioredoxin family. Plant H-type subfamily.

The protein resides in the cytoplasm. In terms of biological role, participates in various redox reactions through the reversible oxidation of the active center dithiol to a disulfide. The H form is known to activate a number of cytosolic enzymes. The protein is Thioredoxin H-type 1 (THL-1) of Brassica napus (Rape).